We begin with the raw amino-acid sequence, 206 residues long: MTLEWWFAYLLTSIILSLSPGSGAINTMTTSLNHGYRGAVASIAGLQTGLAIHIVLVGVGLGTLFSRSVIAFEVLKWAGAAYLIWLGIQQWRAAGAIDLKSLASTQSRRHLFQRAVFVNLTNPKSIVFLAALFPQFIMPQQPQLMQYIVLGVTTIVVDIIVMIGYATLAQRIALWIKGPKQMKALNKIFGSLFMLVGALLASARHA.

Transmembrane regions (helical) follow at residues 5 to 25 (WWFA…SGAI), 45 to 65 (GLQT…GTLF), 68 to 88 (SVIA…WLGI), 117 to 137 (FVNL…PQFI), 148 to 168 (IVLG…YATL), and 182 to 202 (MKAL…LLAS).

Belongs to the Rht family.

It localises to the cell membrane. In terms of biological role, conducts the efflux of homoserine and homoserine lactone. The chain is Homoserine/homoserine lactone efflux protein (rhtB) from Escherichia coli O157:H7.